We begin with the raw amino-acid sequence, 399 residues long: MSKTISINAGSSSLKWQLYLMPEEKVLAKGLIERIGKDDAISTVKFNGQEASETLAIKDHTAAVKILLDDLIHLDIIKSYDEITGVGHRVVAGGTYFNESALVDSEEVIKKVEELALLAPLHNKANAAGIRAFKKILPDITSVVVFDTAFHTTMPEVAYRYPLPNKYFTENQVRKYGAHGTSHYYVAHEAAKILEKPIEKLKLITVHMGNGVSLTAVDGGKSVDTSMGFTPLGGVMMGTRTGDLDPAVIPYLMDNTEDFKTPEDIRRIFNNESGLLGISELSNDMREIEAATAAGNKNATLAYNMFIDRIIKHIGAYAAVMNGVDAIVFTAGIGENDAHIRSEIMKHFDWLGADIVTEKNEKRPVYGVISSNAAKVKVLVIPTDEELVIARDVERLKTK.

Residue N8 participates in Mg(2+) binding. K15 is a binding site for ATP. R89 serves as a coordination point for substrate. D147 serves as the catalytic Proton donor/acceptor. ATP-binding positions include 207–211, 284–286, and 332–336; these read HMGNG, DMR, and GIGEN. E385 lines the Mg(2+) pocket.

Belongs to the acetokinase family. Homodimer. Requires Mg(2+) as cofactor. Mn(2+) is required as a cofactor.

The protein localises to the cytoplasm. The catalysed reaction is acetate + ATP = acetyl phosphate + ADP. It participates in metabolic intermediate biosynthesis; acetyl-CoA biosynthesis; acetyl-CoA from acetate: step 1/2. Catalyzes the formation of acetyl phosphate from acetate and ATP. Can also catalyze the reverse reaction. In Streptococcus mutans serotype c (strain ATCC 700610 / UA159), this protein is Acetate kinase.